The chain runs to 509 residues: Histidine--tRNA ligase (509 aa).

Belongs to the class-II aminoacyl-tRNA synthetase family. In terms of assembly, homodimer.

Its subcellular location is the cytoplasm. The enzyme catalyses tRNA(His) + L-histidine + ATP = L-histidyl-tRNA(His) + AMP + diphosphate + H(+). The sequence is that of Histidine--tRNA ligase from Rhodopseudomonas palustris (strain TIE-1).